We begin with the raw amino-acid sequence, 345 residues long: GTPase Obg (345 aa).

An Obg domain is found at 1–158 (MFIDSVKITL…RLVRLELKLI (158 aa)). One can recognise an OBG-type G domain in the interval 159–339 (ADVGLVGFPN…LKFMLLEEIK (181 aa)). GTP is bound by residues 165 to 172 (GFPNVGKS), 190 to 194 (FTTLT), 212 to 215 (DIPG), 280 to 283 (SKSD), and 320 to 322 (SSL). 2 residues coordinate Mg(2+): Ser172 and Thr192.

Belongs to the TRAFAC class OBG-HflX-like GTPase superfamily. OBG GTPase family. Monomer. Requires Mg(2+) as cofactor.

It is found in the cytoplasm. Its function is as follows. An essential GTPase which binds GTP, GDP and possibly (p)ppGpp with moderate affinity, with high nucleotide exchange rates and a fairly low GTP hydrolysis rate. Plays a role in control of the cell cycle, stress response, ribosome biogenesis and in those bacteria that undergo differentiation, in morphogenesis control. In Campylobacter jejuni subsp. doylei (strain ATCC BAA-1458 / RM4099 / 269.97), this protein is GTPase Obg.